Here is a 91-residue protein sequence, read N- to C-terminus: Large ribosomal subunit protein bL27 (91 aa).

Positions 1 to 21 (MAHKKSGGSSRNGRDSAGRRL) are disordered.

It belongs to the bacterial ribosomal protein bL27 family.

This is Large ribosomal subunit protein bL27 from Phenylobacterium zucineum (strain HLK1).